We begin with the raw amino-acid sequence, 209 residues long: MDFFTNPNVLFYITAYLVGGIPFGYILAKIFAGVDIKQSGSKSIGATNVLRVVKEKDPKLAKKLAIATVVFDALKGAVLVLIAKLLGFPPATWWLIGIMTVLGHCYSPFLKFEGGKGVATGMGVLLVLLPVETIIGIVTWLIVAKTTKISSLSSLSGLVALVVASFIVHPDMPYVHSHAPLLLLAFIIFYKHLPNIKRLLTGQEGKVAA.

5 helical membrane passes run N8–A28, V78–I98, V124–A144, I149–H169, and P170–Y190.

It belongs to the PlsY family. As to quaternary structure, probably interacts with PlsX.

The protein resides in the cell inner membrane. The catalysed reaction is an acyl phosphate + sn-glycerol 3-phosphate = a 1-acyl-sn-glycero-3-phosphate + phosphate. Its pathway is lipid metabolism; phospholipid metabolism. Its function is as follows. Catalyzes the transfer of an acyl group from acyl-phosphate (acyl-PO(4)) to glycerol-3-phosphate (G3P) to form lysophosphatidic acid (LPA). This enzyme utilizes acyl-phosphate as fatty acyl donor, but not acyl-CoA or acyl-ACP. The chain is Glycerol-3-phosphate acyltransferase from Nitratiruptor sp. (strain SB155-2).